Reading from the N-terminus, the 312-residue chain is Retinol dehydrogenase 8 (312 aa).

Residue 9–18 (LISGCSSGIG) coordinates NADP(+). 3 helical membrane-spanning segments follow: residues 87 to 107 (VLVN…SLAA), 138 to 158 (IVVV…VYAA), and 170 to 190 (LAVQ…GPVV). Ser-143 is a substrate binding site. The active-site Proton acceptor is the Tyr-156.

This sequence belongs to the short-chain dehydrogenases/reductases (SDR) family. In terms of tissue distribution, detected in photoreceptor outer segments in the retina (at protein level).

The protein resides in the membrane. It carries out the reaction all-trans-retinol + NADP(+) = all-trans-retinal + NADPH + H(+). Its function is as follows. Retinol dehydrogenase with a clear preference for NADP. Converts all-trans-retinal to all-trans-retinol. May play a role in the regeneration of visual pigment at high light intensity. This Bos taurus (Bovine) protein is Retinol dehydrogenase 8 (RDH8).